The chain runs to 236 residues: Glucosamine-6-phosphate deaminase (236 aa).

The Proton acceptor; for enolization step role is filled by aspartate 67. The active-site For ring-opening step is the asparagine 136. The active-site Proton acceptor; for ring-opening step is the histidine 138. Catalysis depends on glutamate 143, which acts as the For ring-opening step.

The protein belongs to the glucosamine/galactosamine-6-phosphate isomerase family. NagB subfamily.

The catalysed reaction is alpha-D-glucosamine 6-phosphate + H2O = beta-D-fructose 6-phosphate + NH4(+). It participates in amino-sugar metabolism; N-acetylneuraminate degradation; D-fructose 6-phosphate from N-acetylneuraminate: step 5/5. Functionally, catalyzes the reversible isomerization-deamination of glucosamine 6-phosphate (GlcN6P) to form fructose 6-phosphate (Fru6P) and ammonium ion. This chain is Glucosamine-6-phosphate deaminase, found in Lachnoclostridium phytofermentans (strain ATCC 700394 / DSM 18823 / ISDg) (Clostridium phytofermentans).